A 238-amino-acid polypeptide reads, in one-letter code: Ribonuclease PH (238 aa).

Phosphate-binding positions include Arg-86 and Gly-124 to Arg-126.

The protein belongs to the RNase PH family. Homohexameric ring arranged as a trimer of dimers.

The catalysed reaction is tRNA(n+1) + phosphate = tRNA(n) + a ribonucleoside 5'-diphosphate. In terms of biological role, phosphorolytic 3'-5' exoribonuclease that plays an important role in tRNA 3'-end maturation. Removes nucleotide residues following the 3'-CCA terminus of tRNAs; can also add nucleotides to the ends of RNA molecules by using nucleoside diphosphates as substrates, but this may not be physiologically important. Probably plays a role in initiation of 16S rRNA degradation (leading to ribosome degradation) during starvation. This Yersinia enterocolitica serotype O:8 / biotype 1B (strain NCTC 13174 / 8081) protein is Ribonuclease PH.